Consider the following 162-residue polypeptide: Protein lon-8 (162 aa).

Residues 1 to 23 form the signal peptide; sequence MRNSRFCAILAVISAISVSYVLA.

The protein resides in the secreted. Functionally, secreted protein that is involved in larval elongation, early adult growth and male tail development. The polypeptide is Protein lon-8 (Caenorhabditis elegans).